Here is a 444-residue protein sequence, read N- to C-terminus: Putative cytochrome P450 120 (444 aa).

C391 contacts heme.

This sequence belongs to the cytochrome P450 family. Heme serves as cofactor.

In Synechocystis sp. (strain ATCC 27184 / PCC 6803 / Kazusa), this protein is Putative cytochrome P450 120 (cyp120).